Reading from the N-terminus, the 196-residue chain is Ribosome maturation factor RimP (196 aa).

A disordered region spans residues 164 to 196 (LAPQKPNKPGPKKPGHDKKKPSNEPAAGKPRAE). Over residues 173–182 (GPKKPGHDKK) the composition is skewed to basic residues.

The protein belongs to the RimP family.

The protein resides in the cytoplasm. Its function is as follows. Required for maturation of 30S ribosomal subunits. The sequence is that of Ribosome maturation factor RimP from Xanthomonas campestris pv. campestris (strain B100).